Consider the following 576-residue polypeptide: 3-hydroxy-3-methylglutaryl coenzyme A reductase 1 (576 aa).

The interval 1–35 (MDSRRRPSKPLLTSSGEVLHRKQASPVTDEDQIHR) is disordered. The next 2 membrane-spanning stretches (helical) occupy residues 42-62 (ALPL…FSVA) and 89-109 (AIVS…IDFV). The active-site Charge relay system is Glu255. An N-linked (GlcNAc...) asparagine glycan is attached at Asn319. Active-site charge relay system residues include Lys387 and Asp463. A helical membrane pass occupies residues 532 to 552 (LLATIVAGSVLAGELSLMSAI). Residue His561 is the Proton donor of the active site. An N-linked (GlcNAc...) asparagine glycan is attached at Asn565.

This sequence belongs to the HMG-CoA reductase family. In terms of tissue distribution, expressed in trichomes, leaves, flowers, roots and stems.

The protein localises to the endoplasmic reticulum membrane. It localises to the plastid. Its subcellular location is the chloroplast membrane. The protein resides in the peroxisome membrane. The enzyme catalyses (R)-mevalonate + 2 NADP(+) + CoA = (3S)-3-hydroxy-3-methylglutaryl-CoA + 2 NADPH + 2 H(+). It functions in the pathway metabolic intermediate biosynthesis; (R)-mevalonate biosynthesis; (R)-mevalonate from acetyl-CoA: step 3/3. Its function is as follows. Catalyzes the synthesis of mevalonate, the specific precursor of all isoprenoid compounds present in plants. Component of the triterpene saponins (e.g. ginsenosides or panaxosides) and phytosterols biosynthetic pathways. Promotes triterpenes accumulation in roots. The polypeptide is 3-hydroxy-3-methylglutaryl coenzyme A reductase 1 (Cannabis sativa (Hemp)).